The primary structure comprises 241 residues: Carboxy-S-adenosyl-L-methionine synthase (241 aa).

S-adenosyl-L-methionine contacts are provided by residues Y38, 63–65 (GCS), 88–89 (DN), 116–117 (DI), N131, and R198.

The protein belongs to the class I-like SAM-binding methyltransferase superfamily. Cx-SAM synthase family. As to quaternary structure, homodimer.

The enzyme catalyses prephenate + S-adenosyl-L-methionine = carboxy-S-adenosyl-L-methionine + 3-phenylpyruvate + H2O. Its function is as follows. Catalyzes the conversion of S-adenosyl-L-methionine (SAM) to carboxy-S-adenosyl-L-methionine (Cx-SAM). In Histophilus somni (strain 129Pt) (Haemophilus somnus), this protein is Carboxy-S-adenosyl-L-methionine synthase.